The primary structure comprises 158 residues: 2-C-methyl-D-erythritol 2,4-cyclodiphosphate synthase (158 aa).

2 residues coordinate a divalent metal cation: D9 and H11. Residues 9–11 and 35–36 contribute to the 4-CDP-2-C-methyl-D-erythritol 2-phosphate site; these read DVH and HS. H43 provides a ligand contact to a divalent metal cation. Residues 57–59, 62–66, 133–136, F140, and R143 each bind 4-CDP-2-C-methyl-D-erythritol 2-phosphate; these read DIG, FPDTD, and TTTE.

The protein belongs to the IspF family. In terms of assembly, homotrimer. Requires a divalent metal cation as cofactor.

The catalysed reaction is 4-CDP-2-C-methyl-D-erythritol 2-phosphate = 2-C-methyl-D-erythritol 2,4-cyclic diphosphate + CMP. It participates in isoprenoid biosynthesis; isopentenyl diphosphate biosynthesis via DXP pathway; isopentenyl diphosphate from 1-deoxy-D-xylulose 5-phosphate: step 4/6. Involved in the biosynthesis of isopentenyl diphosphate (IPP) and dimethylallyl diphosphate (DMAPP), two major building blocks of isoprenoid compounds. Catalyzes the conversion of 4-diphosphocytidyl-2-C-methyl-D-erythritol 2-phosphate (CDP-ME2P) to 2-C-methyl-D-erythritol 2,4-cyclodiphosphate (ME-CPP) with a corresponding release of cytidine 5-monophosphate (CMP). This is 2-C-methyl-D-erythritol 2,4-cyclodiphosphate synthase from Haemophilus influenzae (strain 86-028NP).